The following is an 821-amino-acid chain: Palmitoyltransferase AKR1 (821 aa).

The segment at 1–118 is disordered; that stretch reads MVDKDANNEL…KDTASRKSMD (118 aa). Over 1–400 the chain is Cytoplasmic; the sequence is MVDKDANNEL…TIYLNPKIGK (400 aa). The span at 93–117 shows a compositional bias: basic and acidic residues; the sequence is IQDESVNDKTSEPDENKDTASRKSM. 6 ANK repeats span residues 142-172, 176-205, 213-243, 247-277, 289-318, and 322-351; these read PSLHNLMSACQQGDLTKVSELISNGEVKAND, DGITALHWAAINNRLTIVKYLIENDHSKAD, LKASPLHWACRNGLVYIVDYFIVHTDADPTL, QSYNALHLAVHSSNITLIIYLLLSCCGSTST, CDRTSLHWAAYQGDLLTINALLKFGADVSK, and NLFIPLHWAFMKGYKTVLKVLAGAGSNIFA. Residues 401-421 form a helical membrane-spanning segment; sequence LVTFFTPYIILPIMFQVCSFY. N422 is a topological domain (lumenal). A helical transmembrane segment spans residues 423–443; sequence GFVIPKLFFSVVLFAGSIYIL. The Cytoplasmic portion of the chain corresponds to 444 to 463; it reads QKLVIPTYLAEEKAIPKSPL. The chain crosses the membrane as a helical span at residues 464–484; the sequence is LAGIFSGTAFWCIVTWAFNII. Residues 485–494 lie on the Lumenal side of the membrane; sequence PTLLFKKFIS. Residues 495-515 traverse the membrane as a helical segment; that stretch reads NLVLSAFIYLFVWSFFKAMFI. Residues 516-589 are Cytoplasmic-facing; that stretch reads NPGYVPVPSD…YNDIGVRNHK (74 aa). One can recognise a DHHC domain in the interval 546–596; the sequence is NFCVNTFVRKPLRSKYSRFNKKLIARFDHYCPWVYNDIGVRNHKLFVVFVY. C576 acts as the S-palmitoyl cysteine intermediate in catalysis. Residues 590-610 traverse the membrane as a helical segment; it reads LFVVFVYSLNLAVLLFTHLSI. Topologically, residues 611–650 are lumenal; that stretch reads KLFKNTEKMSGYDSDDESQKCWLLSDELCVGYKSHHFQFN. The chain crosses the membrane as a helical span at residues 651–671; that stretch reads LMLWCLIQYIWIAFLCLVQTF. The Cytoplasmic segment spans residues 672 to 821; the sequence is QILKGLTTWE…YPPKLADVDA (150 aa).

The protein belongs to the DHHC palmitoyltransferase family. AKR/ZDHHC17 subfamily.

The protein resides in the early endosome membrane. The protein localises to the golgi apparatus membrane. It carries out the reaction L-cysteinyl-[protein] + hexadecanoyl-CoA = S-hexadecanoyl-L-cysteinyl-[protein] + CoA. Its function is as follows. Palmitoyltransferase specific for casein kinase 1. The chain is Palmitoyltransferase AKR1 (AKR1) from Debaryomyces hansenii (strain ATCC 36239 / CBS 767 / BCRC 21394 / JCM 1990 / NBRC 0083 / IGC 2968) (Yeast).